Consider the following 492-residue polypeptide: Protein PAIR1 (492 aa).

A coiled-coil region spans residues 166–186 (VDSVQSDVMQLNRAMKEASLD). The Nuclear localization signal motif lies at 479–483 (KRRRR).

As to quaternary structure, interacts with CRC1. As to expression, expressed in reproductive organs, but not in vegetative organs.

The protein resides in the nucleus. Involved in spore formation. Plays an essential role in the establishment of homologous chromosome pairing in early meiosis. This Oryza sativa subsp. japonica (Rice) protein is Protein PAIR1 (PAIR1).